A 556-amino-acid chain; its full sequence is Oxygen-dependent choline dehydrogenase (556 aa).

Residue 6–35 participates in FAD binding; the sequence is DYIIIGAGSAGNVLAARLTEDPGVTVLLLE. The active-site Proton acceptor is the His-475.

It belongs to the GMC oxidoreductase family. The cofactor is FAD.

The enzyme catalyses choline + A = betaine aldehyde + AH2. It catalyses the reaction betaine aldehyde + NAD(+) + H2O = glycine betaine + NADH + 2 H(+). It participates in amine and polyamine biosynthesis; betaine biosynthesis via choline pathway; betaine aldehyde from choline (cytochrome c reductase route): step 1/1. In terms of biological role, involved in the biosynthesis of the osmoprotectant glycine betaine. Catalyzes the oxidation of choline to betaine aldehyde and betaine aldehyde to glycine betaine at the same rate. In Xanthomonas axonopodis pv. citri (strain 306), this protein is Oxygen-dependent choline dehydrogenase.